A 268-amino-acid polypeptide reads, in one-letter code: Speedy protein E4A (268 aa).

2 disordered regions span residues 1–26 (MGEG…LGFV) and 43–97 (LCSE…LDSE). Residues 43 to 52 (LCSEEQSPQP) are compositionally biased toward polar residues. Residues 134-265 (PEHHKVFTKL…DLWVWARDRT (132 aa)) are speedy/Ringo box; Required for CDK-binding.

This sequence belongs to the Speedy/Ringo family. Interacts with CDK1. Does not interact with CDK2 in vivo. In terms of tissue distribution, testis-specific.

The protein resides in the nucleus. Functionally, promotes progression through the cell cycle via binding and activation of CDK1. The chain is Speedy protein E4A from Mus musculus (Mouse).